A 303-amino-acid polypeptide reads, in one-letter code: Tyrosine-protein phosphatase 3 (303 aa).

The region spanning 24-292 (YMIIEGLNEE…VFLYTVSQEL (269 aa)) is the Tyrosine-protein phosphatase domain. Catalysis depends on Cys-227, which acts as the Phosphocysteine intermediate.

It belongs to the protein-tyrosine phosphatase family. Non-receptor class subfamily.

It localises to the cytoplasm. It catalyses the reaction O-phospho-L-tyrosyl-[protein] + H2O = L-tyrosyl-[protein] + phosphate. Contributes to dephosphorylation of tyrosine 15 of cdc2. In Schizosaccharomyces pombe (strain 972 / ATCC 24843) (Fission yeast), this protein is Tyrosine-protein phosphatase 3 (pyp3).